A 370-amino-acid polypeptide reads, in one-letter code: DNA replication and repair protein RecF (370 aa).

Gly-30–Thr-37 is an ATP binding site.

This sequence belongs to the RecF family.

Its subcellular location is the cytoplasm. In terms of biological role, the RecF protein is involved in DNA metabolism; it is required for DNA replication and normal SOS inducibility. RecF binds preferentially to single-stranded, linear DNA. It also seems to bind ATP. The protein is DNA replication and repair protein RecF of Bacteroides fragilis (strain YCH46).